Here is a 195-residue protein sequence, read N- to C-terminus: Imidazoleglycerol-phosphate dehydratase (195 aa).

It belongs to the imidazoleglycerol-phosphate dehydratase family.

It is found in the cytoplasm. It catalyses the reaction D-erythro-1-(imidazol-4-yl)glycerol 3-phosphate = 3-(imidazol-4-yl)-2-oxopropyl phosphate + H2O. Its pathway is amino-acid biosynthesis; L-histidine biosynthesis; L-histidine from 5-phospho-alpha-D-ribose 1-diphosphate: step 6/9. This chain is Imidazoleglycerol-phosphate dehydratase, found in Burkholderia cenocepacia (strain HI2424).